The chain runs to 473 residues: Adenosylhomocysteinase (473 aa).

3 residues coordinate substrate: threonine 64, aspartate 139, and glutamate 199. An NAD(+)-binding site is contributed by 200 to 202 (TTT). Residues lysine 229 and aspartate 233 each coordinate substrate. NAD(+) is bound by residues asparagine 234, 263-268 (GYGDVG), glutamate 286, asparagine 321, 342-344 (IGH), and asparagine 387.

Belongs to the adenosylhomocysteinase family. NAD(+) serves as cofactor.

It is found in the cytoplasm. The catalysed reaction is S-adenosyl-L-homocysteine + H2O = L-homocysteine + adenosine. The protein operates within amino-acid biosynthesis; L-homocysteine biosynthesis; L-homocysteine from S-adenosyl-L-homocysteine: step 1/1. May play a key role in the regulation of the intracellular concentration of adenosylhomocysteine. In Paraburkholderia phytofirmans (strain DSM 17436 / LMG 22146 / PsJN) (Burkholderia phytofirmans), this protein is Adenosylhomocysteinase.